Reading from the N-terminus, the 106-residue chain is MTAATQFDQVSIIKRANVYFDGKCVSHTVVFPDGSRKTLGVILPGALNFGTDAAELMEVQAGQCRIRLEGSEDWKTYGAGESFSVPGNSRFDIDVVETLDYVCSYL.

This sequence belongs to the nucleoside phosphorylase PpnP family.

The catalysed reaction is a purine D-ribonucleoside + phosphate = a purine nucleobase + alpha-D-ribose 1-phosphate. The enzyme catalyses adenosine + phosphate = alpha-D-ribose 1-phosphate + adenine. It catalyses the reaction cytidine + phosphate = cytosine + alpha-D-ribose 1-phosphate. It carries out the reaction guanosine + phosphate = alpha-D-ribose 1-phosphate + guanine. The catalysed reaction is inosine + phosphate = alpha-D-ribose 1-phosphate + hypoxanthine. The enzyme catalyses thymidine + phosphate = 2-deoxy-alpha-D-ribose 1-phosphate + thymine. It catalyses the reaction uridine + phosphate = alpha-D-ribose 1-phosphate + uracil. It carries out the reaction xanthosine + phosphate = alpha-D-ribose 1-phosphate + xanthine. In terms of biological role, catalyzes the phosphorolysis of diverse nucleosides, yielding D-ribose 1-phosphate and the respective free bases. Can use uridine, adenosine, guanosine, cytidine, thymidine, inosine and xanthosine as substrates. Also catalyzes the reverse reactions. This chain is Pyrimidine/purine nucleoside phosphorylase, found in Paraburkholderia xenovorans (strain LB400).